A 338-amino-acid chain; its full sequence is Glyceraldehyde-3-phosphate dehydrogenase (338 aa).

Residues 12-13 (RI), D38, and S125 each bind NAD(+). Residues 155-157 (SCT), T186, 216-217 (TG), and R239 contribute to the D-glyceraldehyde 3-phosphate site. C156 serves as the catalytic Nucleophile. An NAD(+)-binding site is contributed by N320.

This sequence belongs to the glyceraldehyde-3-phosphate dehydrogenase family. In terms of assembly, homotetramer.

The protein localises to the cytoplasm. The enzyme catalyses D-glyceraldehyde 3-phosphate + phosphate + NAD(+) = (2R)-3-phospho-glyceroyl phosphate + NADH + H(+). It participates in carbohydrate degradation; glycolysis; pyruvate from D-glyceraldehyde 3-phosphate: step 1/5. Its function is as follows. Catalyzes the oxidative phosphorylation of glyceraldehyde 3-phosphate (G3P) to 1,3-bisphosphoglycerate (BPG) using the cofactor NAD. The first reaction step involves the formation of a hemiacetal intermediate between G3P and a cysteine residue, and this hemiacetal intermediate is then oxidized to a thioester, with concomitant reduction of NAD to NADH. The reduced NADH is then exchanged with the second NAD, and the thioester is attacked by a nucleophilic inorganic phosphate to produce BPG. The sequence is that of Glyceraldehyde-3-phosphate dehydrogenase (gap) from Lactobacillus delbrueckii subsp. bulgaricus.